Consider the following 234-residue polypeptide: Kappa-casein (234 aa).

The signal sequence occupies residues 1–21 (MMKSFLLVVNIVALTLPFLAA). 3 consecutive repeat copies span residues 127–153 (LGKA…QPTV), 154–179 (SAGD…EEAR), and 180–207 (ESPE…PRES). The segment at 127 to 207 (LGKATILSTD…AVPSEEPRES (81 aa)) is 3 X 27 AA tandem repeats. A disordered region spans residues 143–234 (QTPVSAAQPT…STGPAIASMA (92 aa)). Thr-144 is a glycosylation site (O-linked (GalNAc...) threonine). A compositionally biased stretch (polar residues) spans 144–171 (TPVSAAQPTVSAGDTPEVSSQFIDTPDT). Thr-158 is modified (phosphothreonine). Position 162 is a phosphoserine; alternate (Ser-162). O-linked (GalNAc...) serine; alternate glycosylation is present at Ser-162.

The protein belongs to the kappa-casein family. In terms of tissue distribution, mammary gland specific. Secreted in milk.

The protein localises to the secreted. Kappa-casein stabilizes micelle formation, preventing casein precipitation in milk. This is Kappa-casein (CSN3) from Cavia porcellus (Guinea pig).